We begin with the raw amino-acid sequence, 311 residues long: N-acetylmuramic acid 6-phosphate etherase (311 aa).

The SIS domain maps to 66-230 (VVEAFEADGR…TTAAMVRLGK (165 aa)). Catalysis depends on glutamate 94, which acts as the Proton donor. Glutamate 125 is an active-site residue.

The protein belongs to the GCKR-like family. MurNAc-6-P etherase subfamily. Homodimer.

It catalyses the reaction N-acetyl-D-muramate 6-phosphate + H2O = N-acetyl-D-glucosamine 6-phosphate + (R)-lactate. It functions in the pathway amino-sugar metabolism; N-acetylmuramate degradation. Functionally, specifically catalyzes the cleavage of the D-lactyl ether substituent of MurNAc 6-phosphate, producing GlcNAc 6-phosphate and D-lactate. In Salinibacter ruber (strain DSM 13855 / M31), this protein is N-acetylmuramic acid 6-phosphate etherase.